A 320-amino-acid polypeptide reads, in one-letter code: Mitochondrial glutamate carrier 2 (320 aa).

Solcar repeat units lie at residues 11-97 (LSIT…LRQL), 105-215 (RNLK…LNQL), and 224-313 (ASFT…GIGE). 3 consecutive transmembrane segments (helical) span residues 17–37 (LING…IDLA), 66–86 (FLGM…EKAI), and 111–131 (MLAG…MEML). Ser-150 is subject to Phosphoserine. 3 helical membrane-spanning segments follow: residues 190-210 (GLGA…PLFA), 230-250 (FVAG…LDVL), and 293-313 (ALVI…GIGE).

Belongs to the mitochondrial carrier (TC 2.A.29) family.

Its subcellular location is the mitochondrion inner membrane. It catalyses the reaction L-glutamate(in) + H(+)(in) = L-glutamate(out) + H(+)(out). Functionally, responsible for the transport of glutamate from the cytosol into the mitochondrial matrix with the concomitant import of a proton (symport system). This chain is Mitochondrial glutamate carrier 2 (Slc25a18), found in Rattus norvegicus (Rat).